The chain runs to 124 residues: Ribonuclease pancreatic (124 aa).

Residues 1-13 (KESAAAKFERQHM) show a composition bias toward basic and acidic residues. Residues 1–24 (KESAAAKFERQHMDSSTSSASSSN) form a disordered region. Positions 7 and 10 each coordinate substrate. His12 functions as the Proton acceptor in the catalytic mechanism. Cystine bridges form between Cys26/Cys84, Cys40/Cys95, Cys58/Cys110, and Cys65/Cys72. Residues 41-45 (KPVNT), Lys66, and Arg85 contribute to the substrate site. His119 serves as the catalytic Proton donor.

It belongs to the pancreatic ribonuclease family. Monomer. Interacts with and forms tight 1:1 complexes with RNH1. Dimerization of two such complexes may occur. Interaction with RNH1 inhibits this protein. As to expression, pancreas.

It localises to the secreted. The catalysed reaction is an [RNA] containing cytidine + H2O = an [RNA]-3'-cytidine-3'-phosphate + a 5'-hydroxy-ribonucleotide-3'-[RNA].. It catalyses the reaction an [RNA] containing uridine + H2O = an [RNA]-3'-uridine-3'-phosphate + a 5'-hydroxy-ribonucleotide-3'-[RNA].. Functionally, endonuclease that catalyzes the cleavage of RNA on the 3' side of pyrimidine nucleotides. Acts on single-stranded and double-stranded RNA. In Connochaetes taurinus (Blue wildebeest), this protein is Ribonuclease pancreatic (RNASE1).